The following is a 1219-amino-acid chain: Pleckstrin homology domain-containing family G member 3 (1219 aa).

Positions 1 to 10 (MPVSTSLHQD) are enriched in polar residues. A disordered region spans residues 1–66 (MPVSTSLHQD…HLPNSNNNSS (66 aa)). The segment covering 18 to 46 (SLTSTTSSSGSSCDSRSAMEEPSSSEAPA) has biased composition (low complexity). S76 is modified (phosphoserine). In terms of domain architecture, DH spans 93–272 (YLGRVVREIV…TCVAWYINDM (180 aa)). Residues 296–394 (DLTTYGELVL…WTHHIKRLIL (99 aa)) enclose the PH domain. The segment covering 431-442 (WSSQDEVSTNVR) has biased composition (polar residues). 2 disordered regions span residues 431 to 599 (WSSQ…PSVL) and 613 to 708 (FSRR…KESA). S433 is modified (phosphoserine). Positions 446–463 (RQSEPTKHLLRQLNEKAR) are enriched in basic and acidic residues. Residues S576, S577, S618, S631, S640, S643, and S647 each carry the phosphoserine modification. The segment covering 630 to 645 (GSPRLVSRSSSVLSLE) has biased composition (low complexity). Basic and acidic residues predominate over residues 696–708 (EPDRSSCKKKESA). S741, S779, and S827 each carry phosphoserine. Disordered stretches follow at residues 756–780 (RFNSLPRPDPEPVPPVGSKRQVGSR), 821–840 (MESSGGSPGKGPGQGQANGF), 859–878 (EESATASPESSSPTEGRSPA), 955–1133 (APER…LYVT), and 1146–1207 (VMEK…RVRN). The segment covering 826–836 (GSPGKGPGQGQ) has biased composition (gly residues). The segment covering 859-873 (EESATASPESSSPTE) has biased composition (low complexity). S962, S1011, S1023, S1037, and S1040 each carry phosphoserine. The segment covering 1020 to 1029 (SAVSQRTTSP) has biased composition (polar residues). Residues 1049–1065 (DVRELCSKYASRDEARR) show a composition bias toward basic and acidic residues. S1081 carries the post-translational modification Phosphoserine. R1107 is modified (omega-N-methylarginine). The span at 1187–1197 (QPKEEGSRDPA) shows a compositional bias: basic and acidic residues.

Its subcellular location is the cytoplasm. It is found in the cytoskeleton. In terms of biological role, plays a role in controlling cell polarity and cell motility by selectively binding newly polymerized actin and activating RAC1 and CDC42 to enhance local actin polymerization. The sequence is that of Pleckstrin homology domain-containing family G member 3 from Homo sapiens (Human).